The chain runs to 326 residues: MSDFSPDMKNLDIDPIPVDCDLSYNTNIEVLKFTAQIIYIITGIFLNSAVLGTILWRCREVYSTNSFFTLFSVDCIANISILITEGLFARFFIYFTPICPVLADYFQSPLVGFKIIMLLTHHVSICKSLLQVLLVLNRMTCVLFPITHDSIWRKSLKYVISAVFLIPFCADWNIAISRVYMQSTYGGFWVSYFKKVSWASQSRFQLVFIIIALSFTFICTAITLLKLPERSKEIEKAISNATVIISIGFTFKVLFQIYYSFFFSYTDASSPVYGFSFLALDFLTVGSPIVMICVSRNLRTHIFKSKRKNQTLSKMLTRTSGMVIAR.

A run of 7 helical transmembrane segments spans residues Gln-36–Trp-56, Phe-67–Ile-83, Ile-115–Val-135, Leu-156–Ile-176, Phe-204–Leu-224, Val-243–Phe-263, and Gly-274–Val-294.

It belongs to the nematode receptor-like protein srg family.

The protein localises to the membrane. In Caenorhabditis elegans, this protein is Serpentine receptor class gamma-14 (srg-14).